Consider the following 1079-residue polypeptide: Electrogenic sodium bicarbonate cotransporter 1 (1079 aa).

The tract at residues 1 to 62 (MEDEAVLDRG…EKKEKERISE (62 aa)) is required for interaction with AHCYL1. Topologically, residues 1-466 (MEDEAVLDRG…FASDFYDALN (466 aa)) are cytoplasmic. At glutamate 21 the chain carries Phosphoserine. Residue tyrosine 30 is modified to Phosphotyrosine. The segment covering 39-52 (YRRRRRHKRKAGHK) has biased composition (basic residues). A disordered region spans residues 39–78 (YRRRRRHKRKAGHKEKKEKERISENYSDKSDVENADESSS). A compositionally biased stretch (basic and acidic residues) spans 53–70 (EKKEKERISENYSDKSDV). Residues serine 61, serine 65, serine 68, serine 223, serine 232, serine 233, and serine 245 each carry the phosphoserine modification. Residues 235–266 (SRMFSNPDNGSPAMTHRNLTSSSLNDISDKPE) are disordered. 2 positions are modified to phosphothreonine: threonine 249 and threonine 254. The segment covering 251 to 260 (RNLTSSSLND) has biased composition (polar residues). Serine 256, serine 257, and serine 262 each carry phosphoserine. The helical transmembrane segment at 467–491 (IQALSAILFIYLATVTNAITFGGLL) threads the bilayer. Residues 492–501 (GDATDNMQGV) are Extracellular-facing. The helical transmembrane segment at 502–520 (LESFLGTAVSGAIFCLFAG) threads the bilayer. Glutamine 521 is a topological domain (cytoplasmic). A discontinuously helical membrane pass occupies residues 522–542 (PLTILSSTGPVLVFERLLFNF). The Extracellular portion of the chain corresponds to 543-550 (SKDHNFDY). The chain crosses the membrane as a helical span at residues 551–571 (LEFRLWIGLWSAFMCLVLVAT). Topologically, residues 572–585 (DASFLVQYFTRFTE) are cytoplasmic. A helical transmembrane segment spans residues 586–609 (EGFSSLISFIFIYDAFKKMIKLAD). At 610-692 (YYPINSDFKV…GNNCDFVPDI (83 aa)) the chain is on the extracellular side. Residues 693–710 (TLMSFILFLGTYTSSMAM) traverse the membrane as a helical segment. Residues 711-725 (KKFKTSRYFPTTARK) are Cytoplasmic-facing. The chain crosses the membrane as a helical span at residues 726–745 (LISDFAIILSILIFCVIDAL). Residues 746 to 779 (VGVDTPKLIVPSEFKPTSPNRGWFVPPFGGNPWW) lie on the Extracellular side of the membrane. The tract at residues 748–779 (VDTPKLIVPSEFKPTSPNRGWFVPPFGGNPWW) is interaction with CA4. Residues 780-807 (VCLAAAIPALLVTILIFMDQQITAVIVN) form a helical membrane-spanning segment. Over 808 to 819 (RKEHKLKKGAGY) the chain is Cytoplasmic. The helical transmembrane segment at 820 to 836 (HLDLFWVAILMVVCSFM) threads the bilayer. A topological domain (extracellular) is located at residue alanine 837. Residues 838 to 855 (LPWYVAATVISIAHIDSL) form a discontinuously helical membrane-spanning segment. Topologically, residues 856 to 877 (KMETETSAPGEQPKFLGVREQR) are cytoplasmic. The helical transmembrane segment at 878–894 (VTGTLVFILTGLSVFMA) threads the bilayer. At 895–901 (PILKFIP) the chain is on the extracellular side. The helical transmembrane segment at 902 to 918 (MPVLYGVFLYMGVASLN) threads the bilayer. Over 919 to 960 (GVQFMDRLKLLLMPLKHQPDFIYLRHVPLRRVHLFTFLQVLC) the chain is Cytoplasmic. Positions 961–986 (LALLWILKSTVAAIIFPVMILALVAV) form an intramembrane region, discontinuously helical. Residues 987–1079 (RKGMDYLFSQ…STFLERHTSC (93 aa)) lie on the Cytoplasmic side of the membrane. A CA2-binding region spans residues 1002-1004 (LDD). The disordered stretch occupies residues 1012–1079 (KKKEDEKKKK…STFLERHTSC (68 aa)). Residues serine 1026 and serine 1029 each carry the phosphoserine modification. The interval 1030–1033 (DNDD) is CA2-binding. Phosphoserine is present on residues serine 1034 and serine 1044. The tract at residues 1057–1059 (FLS) is required for basolateral targeting. Basic and acidic residues predominate over residues 1062 to 1079 (KPLDRERSSTFLERHTSC). Serine 1069 is subject to Phosphoserine.

The protein belongs to the anion exchanger (TC 2.A.31) family. Homodimer. Interacts with CA2/carbonic anhydrase 2 and CA4/carbonic anhydrase 4 which may regulate transporter activity. Isoform 1 but not isoform 2 interacts with AHCYL1 (via PEST domain when phosphorylated); the interaction increases SLC4A4 isoform 1 activity. Interacts with AHCYL2. In terms of processing, phosphorylation of Ser-1026 by PKA increases the binding of CA2 and changes the Na(+):HCO3(-) stoichiometry of the transporter from 3:1 to 2:1. Phosphorylated in presence of STK39 and dephosphorylated in presence of PP1 phosphatase; phosphorylation seems to inhibit SLC4A4 activity. Post-translationally, N-glycosylated. May not be necessary for the transporter basic functions. In terms of tissue distribution, isoform 1 is specifically expressed in pancreatic ducts and acini. Also expressed in parotid acinar cells and in the colonic crypts.

Its subcellular location is the basolateral cell membrane. The protein resides in the cell membrane. The catalysed reaction is 2 hydrogencarbonate(out) + Na(+)(out) = 2 hydrogencarbonate(in) + Na(+)(in). The enzyme catalyses 3 hydrogencarbonate(out) + Na(+)(out) = 3 hydrogencarbonate(in) + Na(+)(in). Its activity is regulated as follows. Activated by cyclic AMP. In terms of biological role, electrogenic sodium/bicarbonate cotransporter with a Na(+):HCO3(-) stoichiometry varying from 1:2 to 1:3. May regulate bicarbonate influx/efflux at the basolateral membrane of cells and regulate intracellular pH. The sequence is that of Electrogenic sodium bicarbonate cotransporter 1 (Slc4a4) from Mus musculus (Mouse).